We begin with the raw amino-acid sequence, 118 residues long: Small ribosomal subunit protein uS13 (118 aa).

The tract at residues 94–118 (SLPVRGQRTKTNARTRKGPRKAIKK) is disordered.

This sequence belongs to the universal ribosomal protein uS13 family. As to quaternary structure, part of the 30S ribosomal subunit. Forms a loose heterodimer with protein S19. Forms two bridges to the 50S subunit in the 70S ribosome.

Located at the top of the head of the 30S subunit, it contacts several helices of the 16S rRNA. In the 70S ribosome it contacts the 23S rRNA (bridge B1a) and protein L5 of the 50S subunit (bridge B1b), connecting the 2 subunits; these bridges are implicated in subunit movement. Contacts the tRNAs in the A and P-sites. This chain is Small ribosomal subunit protein uS13, found in Aeromonas hydrophila subsp. hydrophila (strain ATCC 7966 / DSM 30187 / BCRC 13018 / CCUG 14551 / JCM 1027 / KCTC 2358 / NCIMB 9240 / NCTC 8049).